The chain runs to 345 residues: L-rhamnose-proton symporter (345 aa).

The next 10 membrane-spanning stretches (helical) occupy residues 4-24 (AITMGILWHLIGAASAACFYA), 38-58 (WSVGGVVSWLILPWVVSALLL), 68-88 (FSAATLLPVFLFGAMWGIGNI), 101-121 (MGIGIAIGITLIVGTLMTPLL), 131-151 (TAGGRMTLLGVFVALVGVAIV), 175-195 (LVLAVLCGVFSAGMSFAMDAA), 214-234 (LPSYVVIMGGGALINLGFCFI), 259-279 (VLLSALGGLMWYLQFFFYAWG), 290-310 (ISWMLHMSFYVLCGGIVGLLL), and 323-343 (VLSLGCVVIIVAANIVGLGMA).

It belongs to the L-rhamnose transporter (TC 2.A.7.6) family.

The protein localises to the cell inner membrane. The catalysed reaction is L-rhamnopyranose(in) + H(+)(in) = L-rhamnopyranose(out) + H(+)(out). Functionally, uptake of L-rhamnose across the cytoplasmic membrane with the concomitant transport of protons into the cell (symport system). The sequence is that of L-rhamnose-proton symporter from Cronobacter sakazakii (strain ATCC BAA-894) (Enterobacter sakazakii).